Here is a 471-residue protein sequence, read N- to C-terminus: 7-dehydrocholesterol reductase (471 aa).

Residues 1-23 (MASKSQHNAPKVKSPNGKAGSQG) form a disordered region. Phosphoserine is present on serine 14. Transmembrane regions (helical) follow at residues 36–56 (LASI…FIMA), 95–115 (LYAL…DFCH), 144–164 (LQAW…LSWF), 173–193 (WIPL…FAMI), 233–253 (LFFN…SFAA), 262–282 (VTNS…DFFW), 302–322 (LGWG…LYLV), and 327–347 (QLST…YYIF). Residues lysine 354, arginine 358, leucine 391, tryptophan 396, and 403 to 404 (NY) each bind NADP(+). The chain crosses the membrane as a helical span at residues 416-436 (LACGGGHLLPYFYIIYMTILL). NADP(+) contacts are provided by residues aspartate 443, 447 to 451 (CANKY), and tyrosine 458.

Belongs to the ERG4/ERG24 family. In terms of assembly, interacts with DHCR24; this interaction regulates DHCR7 activity. Interacts with TMEM147.

It is found in the endoplasmic reticulum membrane. It carries out the reaction cholesterol + NADP(+) = 7-dehydrocholesterol + NADPH + H(+). The catalysed reaction is 7-dehydrodesmosterol + NADPH + H(+) = desmosterol + NADP(+). The enzyme catalyses 5,6alpha-epoxy-5alpha-cholestan-3beta-ol + H2O = 5alpha-cholestane-3beta,5,6beta-triol. It catalyses the reaction 5,6beta-epoxy-5beta-cholestan-3beta-ol + H2O = 5alpha-cholestane-3beta,5,6beta-triol. It functions in the pathway steroid biosynthesis; cholesterol biosynthesis. Its function is as follows. Oxidoreductase that catalyzes the last step of the cholesterol synthesis pathway, which transforms cholesta-5,7-dien-3beta-ol (7-dehydrocholesterol,7-DHC) into cholesterol by reducing the C7-C8 double bond of its sterol core. Can also metabolize cholesta-5,7,24-trien-3beta-ol (7-dehydrodemosterol, 7-DHD) to desmosterol, which is then metabolized by the Delta(24)-sterol reductase (DHCR24) to cholesterol. Modulates ferroptosis (a form of regulated cell death driven by iron-dependent lipid peroxidation) through the metabolic breakdown of the anti-ferroptotic metabolites 7-DHC and 7-DHD which, when accumulated, divert the propagation of peroxyl radical-mediated damage from phospholipid components to its sterol core, protecting plasma and mitochondrial membranes from phospholipid autoxidation. In terms of biological role, component of the microsomal antiestrogen binding site (AEBS), a multiproteic complex at the ER membrane that consists of an association between cholestenol Delta-isomerase/EBP and DHCR7. This complex is responsible for cholesterol-5,6-epoxide hydrolase (ChEH) activity, which consists in the hydration of cholesterol-5,6-epoxides (5,6-EC) into cholestane-3beta,5alpha,6beta-triol (CT). The precise role of each component of this complex has not been described yet. The chain is 7-dehydrocholesterol reductase (Dhcr7) from Mus musculus (Mouse).